The following is a 185-amino-acid chain: Ribosome-recycling factor (185 aa).

It belongs to the RRF family.

It is found in the cytoplasm. Responsible for the release of ribosomes from messenger RNA at the termination of protein biosynthesis. May increase the efficiency of translation by recycling ribosomes from one round of translation to another. This Novosphingobium aromaticivorans (strain ATCC 700278 / DSM 12444 / CCUG 56034 / CIP 105152 / NBRC 16084 / F199) protein is Ribosome-recycling factor.